Consider the following 149-residue polypeptide: Large ribosomal subunit protein bL9 (149 aa).

This sequence belongs to the bacterial ribosomal protein bL9 family.

Functionally, binds to the 23S rRNA. In Helicobacter pylori (strain G27), this protein is Large ribosomal subunit protein bL9.